A 382-amino-acid chain; its full sequence is 1-deoxy-D-xylulose 5-phosphate reductoisomerase (382 aa).

Residues threonine 10, glycine 11, serine 12, isoleucine 13, glycine 36, and asparagine 122 each coordinate NADPH. Lysine 123 contributes to the 1-deoxy-D-xylulose 5-phosphate binding site. Position 124 (glutamate 124) interacts with NADPH. Aspartate 148 contributes to the Mn(2+) binding site. Serine 149, glutamate 150, serine 174, and histidine 197 together coordinate 1-deoxy-D-xylulose 5-phosphate. Residue glutamate 150 coordinates Mn(2+). Glycine 203 contacts NADPH. The 1-deoxy-D-xylulose 5-phosphate site is built by serine 210, asparagine 215, lysine 216, and glutamate 219. Glutamate 219 contacts Mn(2+).

This sequence belongs to the DXR family. Mg(2+) is required as a cofactor. Mn(2+) serves as cofactor.

It catalyses the reaction 2-C-methyl-D-erythritol 4-phosphate + NADP(+) = 1-deoxy-D-xylulose 5-phosphate + NADPH + H(+). It participates in isoprenoid biosynthesis; isopentenyl diphosphate biosynthesis via DXP pathway; isopentenyl diphosphate from 1-deoxy-D-xylulose 5-phosphate: step 1/6. Its function is as follows. Catalyzes the NADPH-dependent rearrangement and reduction of 1-deoxy-D-xylulose-5-phosphate (DXP) to 2-C-methyl-D-erythritol 4-phosphate (MEP). The chain is 1-deoxy-D-xylulose 5-phosphate reductoisomerase from Chlorobium phaeobacteroides (strain BS1).